The following is a 212-amino-acid chain: Abscisic acid receptor PYL10 (212 aa).

The tract at residues 34 to 191 (YAVGPGQCSS…NLQKLKSVSE (158 aa)) is START-like. Residues Lys70, 107-112 (ASTSTE), 134-140 (RLRNYRS), and Glu156 contribute to the abscisate site. The short motif at 103 to 107 (SGLPA) is the Gate loop element. The short motif at 133-135 (HRL) is the Latch loop element.

This sequence belongs to the PYR/PYL/RCAR abscisic acid intracellular receptor family. In terms of assembly, homodimer. Interacts with PP2C53. Binding to PP2C53 is dependent on the presence of abscisic acid (ABA). Interacts with PP2C50. Binding to PP2C50 is dependent on the presence of ABA.

Its subcellular location is the cytoplasm. The protein localises to the cytosol. It is found in the nucleus. In terms of biological role, inhibits the protein phosphatases PP2C06 and PP2C09 when activated by abscisic acid (ABA). Together with PP2C53, SAPK8 and SAPK10, may form an ABA signaling module involved in stress response. In Oryza sativa subsp. japonica (Rice), this protein is Abscisic acid receptor PYL10.